The primary structure comprises 164 residues: Putative pre-16S rRNA nuclease (164 aa).

Belongs to the YqgF nuclease family.

The protein localises to the cytoplasm. In terms of biological role, could be a nuclease involved in processing of the 5'-end of pre-16S rRNA. The polypeptide is Putative pre-16S rRNA nuclease (Rhizobium rhizogenes (strain K84 / ATCC BAA-868) (Agrobacterium radiobacter)).